A 350-amino-acid chain; its full sequence is Alcohol dehydrogenase 1 (350 aa).

Zn(2+) is bound by residues Cys46, His69, Cys100, Cys103, Cys106, Cys114, and Cys156. NAD(+) contacts are provided by residues 180 to 186 (GAAGGLG), Asp204, Lys209, 271 to 273 (VGL), and Arg343.

The protein belongs to the zinc-containing alcohol dehydrogenase family. Homotetramer. Requires Zn(2+) as cofactor.

It is found in the cytoplasm. It catalyses the reaction a primary alcohol + NAD(+) = an aldehyde + NADH + H(+). The catalysed reaction is a secondary alcohol + NAD(+) = a ketone + NADH + H(+). This chain is Alcohol dehydrogenase 1 (ADH1), found in Kluyveromyces lactis (strain ATCC 8585 / CBS 2359 / DSM 70799 / NBRC 1267 / NRRL Y-1140 / WM37) (Yeast).